Reading from the N-terminus, the 422-residue chain is MDDGEAARRHRHRAISGGLTALAVRLADRLGAASPGRNLAFSPLSVHAALSLAAAGAAGGTLDEILAVLGAASRDDLAAFVGRTAETALADRGPESLGPRVVFAPGVWCDAARPFKPAYRAAVAAEYNAEATVVDFKNKVEEARKQINAWARRATGKLITDVLPPRSVGPETAVVLGNAIYFKGKWDRPFNESDTERKPFYRHDGAAAAAAVADVPYMSSRSYQRVAVHDGFKVLKLRYRSPRLLRDKRKRGGGGDVGGEFTRYAMAIFLPDARDGLRGLVERMASRPGFLHEHMPAAWPVPVGEFRVPKFKVSCGGSVVGALEQLGLRLPFSPELADLSDMVEDDGSGWPLFVGDIQHKAVIEVNEEGTVAAAATMTRMLPSGVPPPPVDFVAEHPFAYFIVEEMSSAVVFAGHIVDPSME.

Residues 369–393 (GTVAAAATMTRMLPSGVPPPPVDFV) form an RCL region.

It belongs to the serpin family.

Probable serine protease inhibitor. The polypeptide is Putative serpin-Z8 (Oryza sativa subsp. japonica (Rice)).